A 611-amino-acid chain; its full sequence is TANK-binding kinase 1-binding protein 1 (611 aa).

The interval 1–280 (MESMFEDDIS…QDLASNQSEC (280 aa)) is homodimerization. A coiled-coil region spans residues 48–162 (YGDIKERLGG…ALVETHLRQI (115 aa)). Residue S184 is modified to Phosphoserine. Residues 218–277 (TSVSVSELERRRLEEALEAAQGEARGAQLREEQLQAECERLQGELKQLQETRAQDLASNQ) adopt a coiled-coil conformation. Residues 281-330 (DMAWVKRVGDDQVNLALAYTELTEELGRLRELSSLQGRILRTLLQEQARN) are interaction with TBK1 and IKBKE. The interval 328–437 (ARNAGQRHSP…PPPPPGERTL (110 aa)) is disordered. Pro residues predominate over residues 346–361 (PACPSPSPPARPPPCA). A compositionally biased stretch (low complexity) spans 362 to 372 (PCQSPAAQRRS). Phosphoserine occurs at positions 365, 372, 379, 385, 400, and 415. Residues 389-406 (PSCPSPVPQRRSPVPPSC) show a composition bias toward pro residues. Over residues 416–433 (PVPPSCPAPQPRPPPPPG) the composition is skewed to pro residues. S500 and S530 each carry phosphoserine. The segment at 579–605 (IRSCPLCQLGFPVGYPDDALIKHIDSH) adopts a UBZ1-type zinc-finger fold. Residues C582, C585, H601, and H605 each coordinate Zn(2+).

In terms of assembly, homodimer. May form a heterodimer with NAP1. Interacts with TKB1 and IKBKE. Weakly interacts with DDX3X.

Its function is as follows. Adapter protein which constitutively binds TBK1 and IKBKE playing a role in antiviral innate immunity. Essential for the efficient induction of IRF-dependent transcription following infection with Sendai virus. The polypeptide is TANK-binding kinase 1-binding protein 1 (Mus musculus (Mouse)).